A 147-amino-acid chain; its full sequence is Submaxillary gland androgen-regulated protein 3A (147 aa).

The signal sequence occupies residues 1–22; sequence MKPLNLVLGLCILVGCFLSCEC. A disordered region spans residues 27-128; sequence RRHDPRGPFP…ISITTPTARD (102 aa). Pro residues predominate over residues 33 to 105; it reads GPFPPPPPPH…PTPSIPPTGP (73 aa). 3 tandem repeats follow at residues 43–54, 55–66, and 67–78. Residues 43-78 are 3 X 12 AA tandem repeats of G-P-G-I-G-R-P-[HP]-P-P-P-[PF]; that stretch reads GPGIGRPHPPPFGPGIGRPPPPPFGPGIGRPPPPPP. The span at 108–127 shows a compositional bias: polar residues; it reads TVQATTMPAASISITTPTAR.

The protein belongs to the PROL1/PROL3 family. In terms of tissue distribution, secreted into saliva by submaxillary gland.

The protein resides in the secreted. In terms of biological role, may play a role in protection or detoxification. In Mus musculus (Mouse), this protein is Submaxillary gland androgen-regulated protein 3A (Smr3a).